The chain runs to 389 residues: tRNA-specific 2-thiouridylase MnmA (389 aa).

ATP-binding positions include 34–41 and Leu-60; that span reads AMSGGVDS. Cys-128 functions as the Nucleophile in the catalytic mechanism. Cysteines 128 and 225 form a disulfide. Gly-152 is an ATP binding site. Positions 174–176 are interaction with tRNA; it reads RDQ. Catalysis depends on Cys-225, which acts as the Cysteine persulfide intermediate.

The protein belongs to the MnmA/TRMU family.

The protein localises to the cytoplasm. The enzyme catalyses S-sulfanyl-L-cysteinyl-[protein] + uridine(34) in tRNA + AH2 + ATP = 2-thiouridine(34) in tRNA + L-cysteinyl-[protein] + A + AMP + diphosphate + H(+). Catalyzes the 2-thiolation of uridine at the wobble position (U34) of tRNA, leading to the formation of s(2)U34. The polypeptide is tRNA-specific 2-thiouridylase MnmA (Paracoccus denitrificans (strain Pd 1222)).